We begin with the raw amino-acid sequence, 946 residues long: Multiple C2 and transmembrane domain-containing protein 1 (946 aa).

Disordered stretches follow at residues glutamine 28–serine 193 and leucine 205–glutamate 229. Over residues valine 31 to glycine 43 the composition is skewed to gly residues. Residues phenylalanine 87–cysteine 96 show a composition bias toward polar residues. The segment covering proline 143–serine 163 has biased composition (low complexity). The span at arginine 169 to leucine 187 shows a compositional bias: basic and acidic residues. C2 domains are found at residues lysine 235–leucine 353, glutamine 399–leucine 516, and histidine 550–leucine 671. Residues aspartate 270, aspartate 276, aspartate 323, aspartate 325, aspartate 331, aspartate 433, aspartate 439, aspartate 486, aspartate 488, aspartate 494, aspartate 589, aspartate 595, aspartate 641, aspartate 643, and aspartate 649 each coordinate Ca(2+). Transmembrane regions (helical) follow at residues phenylalanine 758–leucine 778 and proline 861–isoleucine 881.

The protein belongs to the MCTP family. Ca(2+) serves as cofactor. Expressed in the brain and central nervous system (at protein level). Isoform 1 and isoform 2 are expressed in the brain, kidney, liver, heart, lung, skeletal muscle, testis and spleen. Isoform 2 shows a higher expression in the brain, heart and skeletal muscle.

The protein localises to the cytoplasmic vesicle. Its subcellular location is the secretory vesicle. It is found in the synaptic vesicle membrane. It localises to the recycling endosome. The protein resides in the endoplasmic reticulum membrane. Functionally, calcium sensor which is essential for the stabilization of normal baseline neurotransmitter release and for the induction and long-term maintenance of presynaptic homeostatic plasticity. Overexpression in cultured neurons significantly inhibits neuronal transferrin endocytosis, secretory vesicle retrieval, cell migration, and oxidative stress from glutamate toxicity. The protein is Multiple C2 and transmembrane domain-containing protein 1 of Rattus norvegicus (Rat).